We begin with the raw amino-acid sequence, 134 residues long: Cystatin-1 (134 aa).

Positions 1 to 17 are cleaved as a signal peptide; the sequence is MKAIYLILTVLCGFSAS. In terms of domain architecture, Cystatin spans 21 to 116; sequence GGWRDKDVDD…CTAIIWTRSW (96 aa). The Secondary area of contact motif lies at 65–69; the sequence is QVVSG. Disulfide bonds link Cys83-Cys96 and Cys107-Cys127.

Belongs to the cystatin family. In terms of tissue distribution, expressed by the venom gland.

Its subcellular location is the secreted. In terms of biological role, inhibits various C1 cysteine proteases. This protein has no toxic activity and its function in the venom is unknown. It may play a role as a housekeeping or regulatory protein. This Chilobrachys guangxiensis (Chinese earth tiger tarantula) protein is Cystatin-1.